The primary structure comprises 508 residues: Photosystem II CP47 reaction center protein (508 aa).

The next 6 helical transmembrane spans lie at 21-36 (SVHI…WAGS), 101-115 (IVFS…IWHW), 140-156 (GIHL…FGAF), 203-218 (IAAG…FHLS), 237-252 (VLSS…AFVV), and 457-472 (TFAL…HGAR).

Belongs to the PsbB/PsbC family. PsbB subfamily. As to quaternary structure, PSII is composed of 1 copy each of membrane proteins PsbA, PsbB, PsbC, PsbD, PsbE, PsbF, PsbH, PsbI, PsbJ, PsbK, PsbL, PsbM, PsbT, PsbX, PsbY, PsbZ, Psb30/Ycf12, at least 3 peripheral proteins of the oxygen-evolving complex and a large number of cofactors. It forms dimeric complexes. The cofactor is Binds multiple chlorophylls. PSII binds additional chlorophylls, carotenoids and specific lipids..

It is found in the plastid. Its subcellular location is the chloroplast thylakoid membrane. One of the components of the core complex of photosystem II (PSII). It binds chlorophyll and helps catalyze the primary light-induced photochemical processes of PSII. PSII is a light-driven water:plastoquinone oxidoreductase, using light energy to abstract electrons from H(2)O, generating O(2) and a proton gradient subsequently used for ATP formation. In Calycanthus floridus var. glaucus (Eastern sweetshrub), this protein is Photosystem II CP47 reaction center protein.